Here is a 400-residue protein sequence, read N- to C-terminus: Argininosuccinate synthase (400 aa).

ATP is bound by residues 11–19 (AYSGGLDTS) and A38. Y89 and S94 together coordinate L-citrulline. G119 contacts ATP. T121, N125, and D126 together coordinate L-aspartate. Residue N125 coordinates L-citrulline. Residues R129, S179, S188, E264, and Y276 each coordinate L-citrulline.

It belongs to the argininosuccinate synthase family. Type 1 subfamily. Homotetramer.

It localises to the cytoplasm. The catalysed reaction is L-citrulline + L-aspartate + ATP = 2-(N(omega)-L-arginino)succinate + AMP + diphosphate + H(+). Its pathway is amino-acid biosynthesis; L-arginine biosynthesis; L-arginine from L-ornithine and carbamoyl phosphate: step 2/3. This is Argininosuccinate synthase from Oleidesulfovibrio alaskensis (strain ATCC BAA-1058 / DSM 17464 / G20) (Desulfovibrio alaskensis).